The primary structure comprises 257 residues: LexA repressor (257 aa).

The H-T-H motif DNA-binding region spans 64 to 84; sequence FREIGEAAGLKSPSSVKHQLQ. Residues serine 181 and lysine 218 each act as for autocatalytic cleavage activity in the active site.

It belongs to the peptidase S24 family. Homodimer.

It catalyses the reaction Hydrolysis of Ala-|-Gly bond in repressor LexA.. Functionally, represses a number of genes involved in the response to DNA damage (SOS response), including recA and lexA. In the presence of single-stranded DNA, RecA interacts with LexA causing an autocatalytic cleavage which disrupts the DNA-binding part of LexA, leading to derepression of the SOS regulon and eventually DNA repair. This is LexA repressor from Bifidobacterium adolescentis (strain ATCC 15703 / DSM 20083 / NCTC 11814 / E194a).